Reading from the N-terminus, the 593-residue chain is Efflux pump FUBT (593 aa).

Residues 1-44 (MAIDPQPSSPSLSSETIANDTIGNDNNVNEPSVEPKTQENQHTV) form a disordered region. A compositionally biased stretch (polar residues) spans 9 to 30 (SPSLSSETIANDTIGNDNNVNE). Asn-19 carries an N-linked (GlcNAc...) asparagine glycan. The next 12 membrane-spanning stretches (helical) occupy residues 98 to 118 (WAFV…SSAY), 135 to 155 (VATL…LIWA), 167 to 187 (FFFT…AGSI), 195 to 215 (FLTG…IADM), 227 to 247 (MFSG…GFLG), 254 to 274 (WLHG…TVFI), 337 to 357 (IYIS…PIVF), 367 to 387 (IGGL…ISFA), 410 to 430 (LPPA…FAWT), 438 to 458 (IVPI…FMAL), 468 to 488 (IFAA…GAAF), and 503 to 523 (WASS…FLFY). The interval 570–593 (THNSHASAAHSHGHRRSLSYTRSV) is disordered.

This sequence belongs to the major facilitator superfamily. DHA1 family. Polyamines/proton antiporter (TC 2.A.1.2.16) subfamily.

The protein resides in the cell membrane. Its function is as follows. Efflux pump involved in export of fusaric acid, a mycotoxin with low to moderate toxicity to animals and humans, but with high phytotoxic properties. Constitutes a self-protecting mechanism of the fungus against critical levels of FSA within the cell. The sequence is that of Efflux pump FUBT from Fusarium oxysporum (Fusarium vascular wilt).